A 47-amino-acid polypeptide reads, in one-letter code: Photosystem II reaction center protein K (47 aa).

A propeptide spanning residues 1-10 (MALINFDLLA) is cleaved from the precursor. A helical transmembrane segment spans residues 26–46 (LPLIPLFFFLLVFVWQAAVGF).

It belongs to the PsbK family. In terms of assembly, PSII is composed of 1 copy each of membrane proteins PsbA, PsbB, PsbC, PsbD, PsbE, PsbF, PsbH, PsbI, PsbJ, PsbK, PsbL, PsbM, PsbT, PsbX, PsbY, Psb30/Ycf12, peripheral proteins PsbO, CyanoQ (PsbQ), PsbU, PsbV and a large number of cofactors. It forms dimeric complexes.

The protein localises to the cellular thylakoid membrane. Its function is as follows. One of the components of the core complex of photosystem II (PSII). PSII is a light-driven water:plastoquinone oxidoreductase that uses light energy to abstract electrons from H(2)O, generating O(2) and a proton gradient subsequently used for ATP formation. It consists of a core antenna complex that captures photons, and an electron transfer chain that converts photonic excitation into a charge separation. The chain is Photosystem II reaction center protein K from Prochlorococcus marinus (strain NATL1A).